Here is a 500-residue protein sequence, read N- to C-terminus: Plexin domain-containing protein 1 (500 aa).

The N-terminal stretch at 1–18 (MRGELWLLVLVLREAARA) is a signal peptide. Residues 19-426 (LSPQPGAGHD…TKGTPVHLGT (408 aa)) are Extracellular-facing. Disordered regions lie at residues 20–39 (SPQP…AAKG) and 46–78 (RRAR…DTLP). Ser33 carries an O-linked (Xyl...) (chondroitin sulfate) serine glycan. Residues 47 to 60 (RARESPGHVSEPDR) show a composition bias toward basic and acidic residues. Residues Asn80 and Asn197 are each glycosylated (N-linked (GlcNAc...) asparagine). The segment at 359 to 379 (FQDEDHDSASPDTSFSPYDGD) is disordered. Residues 368–379 (SPDTSFSPYDGD) show a composition bias toward polar residues. Residues 427–447 (IVGIVLAVLLVAAIILAGIYI) traverse the membrane as a helical segment. The Cytoplasmic portion of the chain corresponds to 448 to 500 (NGHPTSNAALFFIERRPHHWPAMKFRSHPDHSTYAEVEPSGHEKEGFMEAEQC). The segment covering 479 to 494 (STYAEVEPSGHEKEGF) has biased composition (basic and acidic residues). Residues 479 to 500 (STYAEVEPSGHEKEGFMEAEQC) are disordered.

This sequence belongs to the plexin family. In terms of assembly, interacts with NID1. May interact with CTTN. Post-translationally, N-glycosylated. In terms of tissue distribution, detected in urine (at protein level). Detected in endothelial cells from colorectal cancer, and in endothelial cells from primary cancers of the lung, liver, pancreas, breast and brain. Not detectable in endothelial cells from normal tissue. Expressed in fibrovascular membrane with increased expression in individuals with proliferative diabetic retinopathy.

It is found in the secreted. The protein resides in the cell membrane. Its subcellular location is the cell junction. The protein localises to the tight junction. It localises to the cytoplasm. Plays a critical role in endothelial cell capillary morphogenesis. The chain is Plexin domain-containing protein 1 (PLXDC1) from Homo sapiens (Human).